A 115-amino-acid polypeptide reads, in one-letter code: MARVKRGNVARKRRNKILRLARGFRGGNGTQFRTANQRVMKALCNAYRDRRRRKRDFRRLWIARINAAARINGVSYSRLMGGLKKADVRLNRKMLAQLAVVDPGSFSNVVATAKG.

It belongs to the bacterial ribosomal protein bL20 family.

Functionally, binds directly to 23S ribosomal RNA and is necessary for the in vitro assembly process of the 50S ribosomal subunit. It is not involved in the protein synthesizing functions of that subunit. This Parasynechococcus marenigrum (strain WH8102) protein is Large ribosomal subunit protein bL20.